A 248-amino-acid chain; its full sequence is Histone H1, gonadal (248 aa).

Disordered regions lie at residues 1-46 and 115-248; these read PGSP…PPVL and AVAK…KARK. Residues 9 to 39 are compositionally biased toward basic residues; the sequence is ASPRKSPRKSPKKSPRKASASPRRKAKRARA. The 75-residue stretch at 41–115 folds into the H15 domain; the sequence is THPPVLEMVQ…GASGRFRVGA (75 aa). Basic residues predominate over residues 118 to 248; the sequence is KPKKAKKTSA…KRRSPKKARK (131 aa).

Belongs to the histone H1/H5 family. As to expression, sperm.

The protein localises to the nucleus. Its subcellular location is the chromosome. Functionally, histones H1 are necessary for the condensation of nucleosome chains into higher-order structures. This Parechinus angulosus (Angulate sea urchin) protein is Histone H1, gonadal.